A 187-amino-acid polypeptide reads, in one-letter code: GTP cyclohydrolase 1 (187 aa).

Residues Cys-76, His-79, and Cys-148 each contribute to the Zn(2+) site.

It belongs to the GTP cyclohydrolase I family. In terms of assembly, toroid-shaped homodecamer, composed of two pentamers of five dimers.

The catalysed reaction is GTP + H2O = 7,8-dihydroneopterin 3'-triphosphate + formate + H(+). It functions in the pathway cofactor biosynthesis; 7,8-dihydroneopterin triphosphate biosynthesis; 7,8-dihydroneopterin triphosphate from GTP: step 1/1. The protein is GTP cyclohydrolase 1 of Streptococcus agalactiae serotype V (strain ATCC BAA-611 / 2603 V/R).